The following is a 419-amino-acid chain: 2-amino-3-ketobutyrate coenzyme A ligase, mitochondrial (419 aa).

The transit peptide at 1 to 21 (MWPGNAWRAALFWVPRGRRAQ) directs the protein to the mitochondrion. At lysine 45 the chain carries N6-acetyllysine; alternate. Residue lysine 45 is modified to N6-succinyllysine; alternate. 134–135 (CY) is a binding site for pyridoxal 5'-phosphate. Histidine 159 provides a ligand contact to substrate. Lysine 187 bears the N6-acetyllysine; alternate mark. Lysine 187 is subject to N6-succinyllysine; alternate. Pyridoxal 5'-phosphate-binding positions include serine 206, 262–265 (TLGK), and 295–296 (SN). Position 265 is an N6-(pyridoxal phosphate)lysine (lysine 265). N6-succinyllysine occurs at positions 326 and 368. Lysine 383 carries the post-translational modification N6-acetyllysine; alternate. Lysine 383 is subject to N6-succinyllysine; alternate. Substrate is bound at residue arginine 389.

This sequence belongs to the class-II pyridoxal-phosphate-dependent aminotransferase family. Pyridoxal 5'-phosphate serves as cofactor. As to expression, strongly expressed in heart, brain, liver and pancreas. Also found in lung.

It localises to the mitochondrion. Its subcellular location is the nucleus. It catalyses the reaction glycine + acetyl-CoA = (2S)-2-amino-3-oxobutanoate + CoA. Its function is as follows. Pyridoxal phosphate (PLP) dependent enzyme, which catalyzes the cleavage of 2-amino-3-oxobutanoate to glycine and acetyl-CoA. The chain is 2-amino-3-ketobutyrate coenzyme A ligase, mitochondrial from Homo sapiens (Human).